We begin with the raw amino-acid sequence, 283 residues long: Chromatin modification-related protein png1 (283 aa).

A compositionally biased stretch (low complexity) spans 137–171; sequence YSPSGASSARQTPAPSRSGASTAGRRRTSATTRGA. Positions 137–224 are disordered; the sequence is YSPSGASSAR…NEMVSEEDME (88 aa). A compositionally biased stretch (polar residues) spans 181-216; the sequence is YTASLADSGSTRGQKVSNATATTQLETKADSTTPNE. A PHD-type zinc finger spans residues 228–277; sequence EKYCFCQQGSYGQMVACDNANCEREWFHMECVGLKAPPEGTWYCEACRDQ. Positions 231, 233, 244, 249, 255, 258, 271, and 274 each coordinate Zn(2+).

Belongs to the ING family. As to quaternary structure, interacts with H3K4me3 and to a lesser extent with H3K4me2. Component of a histone deacetylase complex.

The protein resides in the nucleus. Component of a histone deacetylase complex responsible for the deacetylation of lysine residues on the N-terminal part of the core histones (H2A, H2B, H3 and H4). Histone deacetylation gives a tag for epigenetic repression and plays an important role in transcriptional regulation, cell cycle progression and developmental events. Has a role in silencing of mating type genes. This Schizosaccharomyces pombe (strain 972 / ATCC 24843) (Fission yeast) protein is Chromatin modification-related protein png1 (png1).